Consider the following 299-residue polypeptide: Nicotinate-nucleotide pyrophosphorylase [carboxylating] (299 aa).

Positions 8–12 (HLLPP) are important for hexamer formation. Quinolinate-binding positions include arginine 102, 138 to 139 (RK), 160 to 161 (HR), lysine 171, glutamate 201, aspartate 222, 248 to 250 (SGG), and glycine 270. The residue at position 291 (threonine 291) is a Phosphothreonine.

This sequence belongs to the NadC/ModD family. In terms of assembly, hexamer formed by 3 homodimers.

The enzyme catalyses nicotinate beta-D-ribonucleotide + CO2 + diphosphate = quinolinate + 5-phospho-alpha-D-ribose 1-diphosphate + 2 H(+). It participates in cofactor biosynthesis; NAD(+) biosynthesis; nicotinate D-ribonucleotide from quinolinate: step 1/1. Involved in the catabolism of quinolinic acid (QA). This Bos taurus (Bovine) protein is Nicotinate-nucleotide pyrophosphorylase [carboxylating] (QPRT).